The following is a 130-amino-acid chain: Large ribosomal subunit protein bL19 (130 aa).

It belongs to the bacterial ribosomal protein bL19 family.

In terms of biological role, this protein is located at the 30S-50S ribosomal subunit interface and may play a role in the structure and function of the aminoacyl-tRNA binding site. The polypeptide is Large ribosomal subunit protein bL19 (Burkholderia orbicola (strain MC0-3)).